We begin with the raw amino-acid sequence, 329 residues long: MSAYIIETLIKILILVAVFSALGGFATYIERKVLAYFQRRLGPCYVGPFGLLQVAADGIKLFTKEDIIPQGANKFIFTLAPIIAMVSAFVSMAPIPFFPNFTLFGYEIKPLISDINIGFLFFLAVGAAGIYAPILAGLASNNKYSLIGSARATIQLLSFEVVSTLTILAPLMVVGSLSLVEINHYQSGGFLDWLVFKQPLAFVLFLIASYAELNRTPFDLLEHEAEIVAGYCTEYSGLKWGMFFLAEYAHLFAFSFVISIVFFGGFNAWGFIPGGIAILIKAGFFVFLSMWVRATYPHVRPDQLMNMCWKIMLPLALLNIVLTGIIILI.

9 helical membrane passes run 9 to 29 (LIKILILVAVFSALGGFATYI), 42 to 62 (GPCYVGPFGLLQVAADGIKLF), 75 to 95 (FIFTLAPIIAMVSAFVSMAPI), 117 to 137 (IGFLFFLAVGAAGIYAPILAG), 154 to 174 (IQLLSFEVVSTLTILAPLMVV), 188 to 208 (GGFLDWLVFKQPLAFVLFLIA), 238 to 258 (LKWGMFFLAEYAHLFAFSFVI), 269 to 291 (WGFIPGGIAILIKAGFFVFLSMW), and 309 to 329 (WKIMLPLALLNIVLTGIIILI).

This sequence belongs to the complex I subunit 1 family. In terms of assembly, NDH-1 is composed of 14 different subunits. Subunits NuoA, H, J, K, L, M, N constitute the membrane sector of the complex.

The protein resides in the cell inner membrane. The catalysed reaction is a quinone + NADH + 5 H(+)(in) = a quinol + NAD(+) + 4 H(+)(out). NDH-1 shuttles electrons from NADH, via FMN and iron-sulfur (Fe-S) centers, to quinones in the respiratory chain. The immediate electron acceptor for the enzyme in this species is believed to be ubiquinone. Couples the redox reaction to proton translocation (for every two electrons transferred, four hydrogen ions are translocated across the cytoplasmic membrane), and thus conserves the redox energy in a proton gradient. This subunit may bind ubiquinone. The protein is NADH-quinone oxidoreductase subunit H of Helicobacter pylori (strain HPAG1).